The sequence spans 495 residues: Cardiolipin synthase A (495 aa).

Helical transmembrane passes span 9–29 (IEVL…WLIT) and 46–66 (MAWL…YLLL). PLD phosphodiesterase domains lie at 227 to 254 (MDLR…IDPK) and 408 to 435 (EGGL…DMRS). Residues His-232, Lys-234, Asp-239, His-413, Lys-415, and Asp-420 contribute to the active site.

It belongs to the phospholipase D family. Cardiolipin synthase subfamily. ClsA sub-subfamily.

Its subcellular location is the cell membrane. It carries out the reaction 2 a 1,2-diacyl-sn-glycero-3-phospho-(1'-sn-glycerol) = a cardiolipin + glycerol. Its function is as follows. Catalyzes the reversible phosphatidyl group transfer from one phosphatidylglycerol molecule to another to form cardiolipin (CL) (diphosphatidylglycerol) and glycerol. This chain is Cardiolipin synthase A, found in Wigglesworthia glossinidia brevipalpis.